The chain runs to 264 residues: Neurexophilin-2 (264 aa).

The signal sequence occupies residues 1–22; that stretch reads MRLRPLPLVVVPGLLQLLFCDS. Positions 23 to 90 are II; it reads KEVVHATEGL…WDWLANITEI (68 aa). Asn86, Asn139, Asn149, and Asn155 each carry an N-linked (GlcNAc...) asparagine glycan. The tract at residues 91–169 is III; the sequence is QEPLARTKRR…LVPPSKVVEF (79 aa). An IV (linker domain) region spans residues 170-178; that stretch reads EVSPQSTLE. The interval 179–264 is v (Cys-rich); that stretch reads TKESKSFNCR…HSETPYLSSG (86 aa).

The protein belongs to the neurexophilin family. Post-translationally, may be proteolytically processed at the boundary between the N-terminal non-conserved and the central conserved domain in neuron-like cells. As to expression, expressed in brain and kidney.

The protein localises to the secreted. May be signaling molecules that resemble neuropeptides and that act by binding to alpha-neurexins and possibly other receptors. The sequence is that of Neurexophilin-2 (NXPH2) from Homo sapiens (Human).